The primary structure comprises 156 residues: 6,7-dimethyl-8-ribityllumazine synthase (156 aa).

Residues Phe23, 57-59, and 81-83 contribute to the 5-amino-6-(D-ribitylamino)uracil site; these read AFE and TVI. Position 86–87 (86–87) interacts with (2S)-2-hydroxy-3-oxobutyl phosphate; that stretch reads ST. His89 functions as the Proton donor in the catalytic mechanism. Phe114 is a binding site for 5-amino-6-(D-ribitylamino)uracil. Arg128 contacts (2S)-2-hydroxy-3-oxobutyl phosphate.

The protein belongs to the DMRL synthase family. As to quaternary structure, forms an icosahedral capsid composed of 60 subunits, arranged as a dodecamer of pentamers.

The catalysed reaction is (2S)-2-hydroxy-3-oxobutyl phosphate + 5-amino-6-(D-ribitylamino)uracil = 6,7-dimethyl-8-(1-D-ribityl)lumazine + phosphate + 2 H2O + H(+). It participates in cofactor biosynthesis; riboflavin biosynthesis; riboflavin from 2-hydroxy-3-oxobutyl phosphate and 5-amino-6-(D-ribitylamino)uracil: step 1/2. In terms of biological role, catalyzes the formation of 6,7-dimethyl-8-ribityllumazine by condensation of 5-amino-6-(D-ribitylamino)uracil with 3,4-dihydroxy-2-butanone 4-phosphate. This is the penultimate step in the biosynthesis of riboflavin. This chain is 6,7-dimethyl-8-ribityllumazine synthase, found in Halalkalibacterium halodurans (strain ATCC BAA-125 / DSM 18197 / FERM 7344 / JCM 9153 / C-125) (Bacillus halodurans).